A 531-amino-acid polypeptide reads, in one-letter code: Zinc finger C2HC domain-containing protein 1C (531 aa).

Residues 16 to 45 (MLPHNTTEAPGPHSAKQDSYEQSDSSQQSL) are disordered. Over residues 35 to 44 (YEQSDSSQQS) the composition is skewed to low complexity. Residues 209 to 264 (VQIRRLEAAGESLEEEIRRKQILLRGKLKKTEEELRRIQTQKEQAKENENRELQKI) are a coiled coil. Disordered regions lie at residues 290 to 318 (FEEE…QLSD) and 334 to 387 (NKIR…PQLG). Residues 293–305 (EFSRDKREDETWE) are compositionally biased toward basic and acidic residues. Residues 306-315 (RSQQNSSPFQ) show a composition bias toward polar residues. Residues 335–345 (KIRDRVSEPSM) are compositionally biased toward basic and acidic residues. A compositionally biased stretch (low complexity) spans 366–380 (SSLSMAPDSSGSSGS). 2 C2HC/C3H-type zinc fingers span residues 385–414 (QLGE…MQGS) and 493–522 (DYIQ…IKNR). Cys-389, Cys-392, His-404, Cys-408, Cys-497, Cys-500, His-512, and Cys-516 together coordinate Zn(2+).

This sequence belongs to the ZC2HC1 family. Requires Zn(2+) as cofactor.

The polypeptide is Zinc finger C2HC domain-containing protein 1C (ZC2HC1C) (Macaca fascicularis (Crab-eating macaque)).